The chain runs to 205 residues: Large ribosomal subunit protein uL3 (205 aa).

The protein belongs to the universal ribosomal protein uL3 family. As to quaternary structure, part of the 50S ribosomal subunit. Forms a cluster with proteins L14 and L19.

One of the primary rRNA binding proteins, it binds directly near the 3'-end of the 23S rRNA, where it nucleates assembly of the 50S subunit. The polypeptide is Large ribosomal subunit protein uL3 (Parabacteroides distasonis (strain ATCC 8503 / DSM 20701 / CIP 104284 / JCM 5825 / NCTC 11152)).